We begin with the raw amino-acid sequence, 354 residues long: UDP-galactose transporter homolog 1 (354 aa).

5 consecutive transmembrane segments (helical) span residues 6–26 (GGSI…FLTW), 54–74 (LVIN…YSVV), 95–112 (FFKS…SSPL), 123–143 (LAYL…HFVL), and 148–168 (FPLY…IFTL). A glycan (N-linked (GlcNAc...) asparagine) is linked at Asn202. The next 4 membrane-spanning stretches (helical) occupy residues 227-247 (YLMC…ALIF), 268-288 (MNIL…FIIL), 295-317 (ILIT…LFGH), and 321-340 (GLQW…EALV).

The protein belongs to the nucleotide-sugar transporter family. SLC35B subfamily.

It is found in the endoplasmic reticulum membrane. In terms of biological role, may be involved in specific transport of UDP-Gal from the cytosol to the Golgi lumen. Involved in the maintenance of optimal conditions for the folding of secretory pathway proteins in the endoplasmic reticulum. The polypeptide is UDP-galactose transporter homolog 1 (HUT1) (Debaryomyces hansenii (strain ATCC 36239 / CBS 767 / BCRC 21394 / JCM 1990 / NBRC 0083 / IGC 2968) (Yeast)).